A 421-amino-acid polypeptide reads, in one-letter code: Synaptotagmin-1 (421 aa).

Residues 1–57 (MVSASRPEALAAPVTTVATLVPHNATEPASPGEGKEDAFSKLKQKFMNELHKIPLPP) lie on the Vesicular side of the membrane. The N-linked (GlcNAc...) asparagine glycan is linked to Asn24. Residues 58–79 (WALIAIAIVAVLLVVTCCFCVC) traverse the membrane as a helical segment. Residues Cys74, Cys75, Cys77, Cys79, and Cys82 are each lipidated (S-palmitoyl cysteine). The Cytoplasmic portion of the chain corresponds to 80–421 (KKCLFKKKNK…EVDAMLAVKK (342 aa)). Residues 112–141 (TMKDQALKDDDAETGLTDGEEKEEPKEEEK) form a disordered region. The segment covering 121 to 133 (DDAETGLTDGEEK) has biased composition (acidic residues). Thr128 is subject to Phosphothreonine. The interval 135 to 381 (EPKEEEKLGK…AIGKVFVGYN (247 aa)) is phospholipid binding. Residues 141-260 (KLGKLQYSLD…DFGHVTEEWR (120 aa)) enclose the C2 1 domain. Ca(2+)-binding residues include Leu171, Asp172, and Asp178. Position 229 is a phosphotyrosine (Tyr229). Asp230, Phe231, Asp232, Ser235, Lys236, and Asp238 together coordinate Ca(2+). At Ser264 the chain carries Phosphoserine. The C2 2 domain maps to 272–405 (KLGDICFSLR…NPRRPIAQWH (134 aa)). Asp303 and Asp309 together coordinate Ca(2+). 2 positions are modified to phosphoserine: Ser342 and Ser344. Residues Asp363, Asp365, and Asp371 each coordinate Ca(2+).

It belongs to the synaptotagmin family. Homotetramer. Heterodimer; heterodimerizes with SYT2 in presence of calcium. Interacts with SCAMP5. Interacts with STON2. Forms a complex with SV2B, syntaxin 1 and SNAP25. Interacts with SV2A, SV2B and SV2C. Interacts with RIMS1. Interacts with PRRT2. Interacts with DNAJC5 in a phosphorylation-dependent manner. Interacts (via N-terminus) with RAB3A. Interacts with SYT12. Interacts with calmodulin. Interacts with DNM1 (via C-terminal proline-rich domain (PRD)); this interaction facilitates vesicle fission during clathrin-mediated endocytosis (CME). Ca(2+) is required as a cofactor. In terms of processing, glycosylated. In terms of tissue distribution, expressed in the brain and adrenal medulla (at protein level).

The protein localises to the cytoplasmic vesicle. Its subcellular location is the secretory vesicle membrane. The protein resides in the secretory vesicle. It localises to the synaptic vesicle membrane. It is found in the chromaffin granule membrane. The protein localises to the cytoplasm. Its function is as follows. Calcium sensor that participates in triggering neurotransmitter release at the synapse. May have a regulatory role in the membrane interactions during trafficking of synaptic vesicles at the active zone of the synapse. It binds acidic phospholipids with a specificity that requires the presence of both an acidic head group and a diacyl backbone. A Ca(2+)-dependent interaction between synaptotagmin and putative receptors for activated protein kinase C has also been reported. It can bind to at least three additional proteins in a Ca(2+)-independent manner; these are neurexins, syntaxin and AP2. Plays a role in dendrite formation by melanocytes. This Mus musculus (Mouse) protein is Synaptotagmin-1.